Consider the following 132-residue polypeptide: Cytochrome B5 isoform C (132 aa).

One can recognise a Cytochrome b5 heme-binding domain in the interval 2-78 (ANLISFHDVA…MKKYCIGDVD (77 aa)). Heme-binding residues include His-37 and His-61. A helical membrane pass occupies residues 110–129 (LLIYLIPLLILGVAFALRFY).

This sequence belongs to the cytochrome b5 family. Interacts with CER1, BI-1, FAH1 and FAH2.

It is found in the endoplasmic reticulum membrane. Functionally, membrane bound hemoprotein which function as an electron carrier for several membrane bound oxygenases, including fatty acid desaturases. This chain is Cytochrome B5 isoform C, found in Arabidopsis thaliana (Mouse-ear cress).